We begin with the raw amino-acid sequence, 160 residues long: MHCPFCRHADTQVVDSRVSEDGATIRRRRRCPACDKRFTTYERVELALPSVVKKDGSRTEFDRRKIVASMQLALRKRPVAADAIDAAVARIEYLLLGSGEREVRSERLGELVMNELRALDTIAYVRFASVYRRFEDVSEFEDVIEEFRRASSPPKPSRKR.

Residues 3-34 (CPFCRHADTQVVDSRVSEDGATIRRRRRCPAC) fold into a zinc finger. Residues 49-139 (PSVVKKDGSR…VYRRFEDVSE (91 aa)) form the ATP-cone domain.

This sequence belongs to the NrdR family. Zn(2+) serves as cofactor.

Its function is as follows. Negatively regulates transcription of bacterial ribonucleotide reductase nrd genes and operons by binding to NrdR-boxes. The protein is Transcriptional repressor NrdR of Paraburkholderia phytofirmans (strain DSM 17436 / LMG 22146 / PsJN) (Burkholderia phytofirmans).